The chain runs to 119 residues: Basic phospholipase A2 (119 aa).

7 disulfides stabilise this stretch: cysteine 11-cysteine 71, cysteine 27-cysteine 118, cysteine 29-cysteine 45, cysteine 44-cysteine 99, cysteine 51-cysteine 92, cysteine 60-cysteine 85, and cysteine 78-cysteine 90. Ca(2+) contacts are provided by tyrosine 28, glycine 30, and glycine 32. Histidine 48 is a catalytic residue. Aspartate 49 lines the Ca(2+) pocket. Aspartate 93 is a catalytic residue.

The protein belongs to the phospholipase A2 family. Group I subfamily. D49 sub-subfamily. Ca(2+) serves as cofactor. Expressed by the venom gland.

Its subcellular location is the secreted. It catalyses the reaction a 1,2-diacyl-sn-glycero-3-phosphocholine + H2O = a 1-acyl-sn-glycero-3-phosphocholine + a fatty acid + H(+). Functionally, snake venom phospholipase A2 (PLA2) that has several activities. It is myotoxic, has weak anticoagulant activity and inhibits neuromuscular transmission by blocking acetylcholine release from the nerve termini. PLA2 catalyzes the calcium-dependent hydrolysis of the 2-acyl groups in 3-sn-phosphoglycerides. This chain is Basic phospholipase A2, found in Hydrophis schistosus (Beaked sea snake).